The primary structure comprises 168 residues: Translationally-controlled tumor protein homolog (168 aa).

Positions 1–168 (MLVYTDLLTG…FAHGLKEVKC (168 aa)) constitute a TCTP domain.

The protein belongs to the TCTP family.

The protein localises to the cytoplasm. Its function is as follows. Involved in calcium binding and microtubule stabilization. This chain is Translationally-controlled tumor protein homolog (TCTP), found in Brassica oleracea (Wild cabbage).